Here is a 1027-residue protein sequence, read N- to C-terminus: Contactin-5 (1027 aa).

A signal peptide spans methionine 1–serine 19. 6 Ig-like C2-type domains span residues proline 32–glutamine 117, asparagine 123–serine 209, proline 227–phenylalanine 307, proline 317–lysine 401, proline 407–serine 494, and proline 498–leucine 593. Residues cysteine 50 and cysteine 100 are joined by a disulfide bond. N-linked (GlcNAc...) asparagine glycans are attached at residues asparagine 65 and asparagine 123. Intrachain disulfides connect cysteine 144/cysteine 196 and cysteine 249/cysteine 296. Asparagine 324, asparagine 376, and asparagine 467 each carry an N-linked (GlcNAc...) asparagine glycan. 3 disulfide bridges follow: cysteine 338–cysteine 385, cysteine 430–cysteine 478, and cysteine 520–cysteine 577. Fibronectin type-III domains are found at residues proline 600 to alanine 698, proline 703 to glycine 800, alanine 805 to serine 899, and proline 901 to glycine 994. 4 N-linked (GlcNAc...) asparagine glycosylation sites follow: asparagine 706, asparagine 743, asparagine 858, and asparagine 929. A lipid anchor (GPI-anchor amidated serine) is attached at serine 999. Positions alanine 1000 to tryptophan 1027 are cleaved as a propeptide — removed in mature form.

The protein belongs to the immunoglobulin superfamily. Contactin family. Interacts with INgCAM/L1 and the tenascin-R TNP protein. Does not interacts with NrCAM. In terms of tissue distribution, expressed by subpopulations of Purkinje cells in the cerebellum. Also expressed by one type of Purkinje cell afferents, the climbing fibers.

The protein resides in the cell membrane. Its function is as follows. Contactins mediate cell surface interactions during nervous system development. May contribute to the formation of somatotopic maps of cerebellar afferents during the development of the nervous system. This is Contactin-5 (CNTN5) from Gallus gallus (Chicken).